We begin with the raw amino-acid sequence, 267 residues long: Tryptophan synthase alpha chain (267 aa).

Catalysis depends on proton acceptor residues E47 and D58.

It belongs to the TrpA family. As to quaternary structure, tetramer of two alpha and two beta chains.

It catalyses the reaction (1S,2R)-1-C-(indol-3-yl)glycerol 3-phosphate + L-serine = D-glyceraldehyde 3-phosphate + L-tryptophan + H2O. The protein operates within amino-acid biosynthesis; L-tryptophan biosynthesis; L-tryptophan from chorismate: step 5/5. The alpha subunit is responsible for the aldol cleavage of indoleglycerol phosphate to indole and glyceraldehyde 3-phosphate. This is Tryptophan synthase alpha chain from Chlorobium limicola (strain DSM 245 / NBRC 103803 / 6330).